Reading from the N-terminus, the 619-residue chain is Kininogen-2 (619 aa).

The first 18 residues, 1-18 (MKLITILFLCSRLLPSLT), serve as a signal peptide directing secretion. Gln19 is modified (pyrrolidone carboxylic acid). A Cystatin kininogen-type 1 domain is found at 27-131 (CNDQDVFKAV…IQTCLITPAE (105 aa)). 9 disulfide bridges follow: Cys27–Cys589, Cys82–Cys93, Cys106–Cys125, Cys141–Cys144, Cys205–Cys217, Cys228–Cys247, Cys261–Cys264, Cys325–Cys337, and Cys348–Cys367. A glycan (N-linked (GlcNAc...) asparagine) is linked at Asn87. Thr136 is a glycosylation site (O-linked (GalNAc...) threonine; partial). Residues 150–253 (TKSPDLEPVL…SQKCDLYPGE (104 aa)) form the Cystatin kininogen-type 2 domain. N-linked (GlcNAc...) asparagine glycans are attached at residues Asn168 and Asn169. A glycan (N-linked (GlcNAc...) asparagine; partial) is linked at Asn197. Asn204 carries N-linked (GlcNAc...) asparagine glycosylation. Positions 270 to 373 (VDSPDLEEAL…TVNCQPLGQT (104 aa)) constitute a Cystatin kininogen-type 3 domain. A glycan (N-linked (GlcNAc...) asparagine) is linked at Asn280. Position 380 is a 4-hydroxyproline (Pro380). The tract at residues 394 to 495 (EGSTTVSLPH…GKNNGKHYDW (102 aa)) is disordered. A glycan (O-linked (GalNAc...) serine) is linked at Ser396. Thr397 and Thr398 each carry an O-linked (GalNAc...) threonine glycan. Ser400 and Ser404 each carry an O-linked (GalNAc...) serine glycan. Basic residues predominate over residues 442–490 (GHKHKHDQGHGHHRSHGLGHGHQKQHGLGHGHKHGHGHGKHKNKGKNNG). O-linked (GalNAc...) serine glycosylation occurs at Ser510. O-linked (GalNAc...) threonine glycans are attached at residues Thr518, Thr522, Thr534, Thr546, Thr551, and Thr568.

In terms of processing, bradykinin is released from kininogen by plasma kallikrein. In terms of tissue distribution, plasma.

The protein localises to the secreted. Its subcellular location is the extracellular space. In terms of biological role, (1) Kininogens are inhibitors of thiol proteases; (2) HMW-kininogen plays an important role in blood coagulation by helping to position optimally prekallikrein and factor XI next to factor XII; (3) HMW-kininogen inhibits the thrombin- and plasmin-induced aggregation of thrombocytes; (4) the active peptide bradykinin that is released from HMW-kininogen shows a variety of physiological effects: (4A) influence in smooth muscle contraction, (4B) induction of hypotension, (4C) natriuresis and diuresis, (4D) decrease in blood glucose level, (4E) it is a mediator of inflammation and causes (4E1) increase in vascular permeability, (4E2) stimulation of nociceptors (4E3) release of other mediators of inflammation (e.g. prostaglandins), (4F) it has a cardioprotective effect (directly via bradykinin action, indirectly via endothelium-derived relaxing factor action); (5) LMW-kininogen inhibits the aggregation of thrombocytes; (6) LMW-kininogen is in contrast to HMW-kininogen not involved in blood clotting. The sequence is that of Kininogen-2 (KNG2) from Bos taurus (Bovine).